The primary structure comprises 93 residues: Large ribosomal subunit protein uL23cy (93 aa).

It belongs to the universal ribosomal protein uL23 family. As to quaternary structure, part of the 50S ribosomal subunit.

The protein localises to the plastid. The protein resides in the chloroplast. Its function is as follows. Binds to 23S rRNA. In Sorghum bicolor (Sorghum), this protein is Large ribosomal subunit protein uL23cy (rpl23-B).